The primary structure comprises 657 residues: Probable potassium transport system protein Kup 1 (657 aa).

The next 12 membrane-spanning stretches (helical) occupy residues 40–60, 88–108, 135–155, 172–192, 198–218, 241–261, 282–302, 320–340, 380–400, 402–422, 432–452, and 454–474; these read VTSGFWALTLGSIGVVFGDIG, VLSLILWALLIVVTAKYVLLL, WFLLALGVVGASMFIGDSMIT, PALEHYVVPLTVLILVLLFAV, ALVASAFGPVMVVWFTCIAVM, FLLSHGTIGLVTLGAVFLAVT, WMFFVLPSLLINYFGQGALVL, LVLPLVGLATAATVIASQAVI, LLLIGVMLLVLLFHTPSNLAS, YGIAVSTTMVADGIMGFVVIW, AAAVILPFVVVDMSFFSANLL, and LLEGAWVPLLFGAAMAGTIWT.

It belongs to the HAK/KUP transporter (TC 2.A.72) family.

The protein resides in the cell inner membrane. It carries out the reaction K(+)(in) + H(+)(in) = K(+)(out) + H(+)(out). In terms of biological role, transport of potassium into the cell. Likely operates as a K(+):H(+) symporter. In Bradyrhizobium diazoefficiens (strain JCM 10833 / BCRC 13528 / IAM 13628 / NBRC 14792 / USDA 110), this protein is Probable potassium transport system protein Kup 1.